We begin with the raw amino-acid sequence, 870 residues long: MOG interacting and ectopic P-granules protein 1 (870 aa).

The disordered stretch occupies residues 1–244 (MVTADETVLA…VPEEDNNEQA (244 aa)). Polar residues predominate over residues 9-20 (LATTTNTTSMSV). The span at 41–51 (EQLKAEQREVM) shows a compositional bias: basic and acidic residues. 3 stretches are compositionally biased toward acidic residues: residues 77–99 (EVIEIDDTEESTDPSPDGSDENG), 129–142 (IEQDDDGDVMEITE), and 203–214 (IELDDDDDDEIQ). 2 consecutive C2H2-type zinc fingers follow at residues 421-444 (HRCDVCGFQTESKLVMSTHKENLH) and 450-473 (FQCTMCKETDTSEQRMKDHYFETH). The segment at 486 to 508 (YPCAICEEDFNFKGVREQHYKQC) adopts a CCHC-type zinc-finger fold. 2 stretches are compositionally biased toward polar residues: residues 673-688 (LQAAVNSMRSQNSQKT) and 695-708 (KLVTTPSHATVGSS). The tract at residues 673–708 (LQAAVNSMRSQNSQKTPTHRSSKLVTTPSHATVGSS) is disordered. C2H2-type zinc fingers lie at residues 713–736 (FVCEICDASVQEKEKYLQHLQTTH), 753–776 (LACSRCRDRFWTYEGLERHLVMSH), 794–815 (GRCKTCGKNYAFNMLQHLVADH), and 826–849 (YSCDVCAFKCSSYQTLEAHLTSNH). The tract at residues 847 to 870 (SNHPKGDKKTSTPAKKDDCITLDD) is disordered. Positions 850–870 (PKGDKKTSTPAKKDDCITLDD) are enriched in basic and acidic residues.

In terms of assembly, interacts with hda-1, let-418, lin-1, mog-1, mog-4, mog-5, mog-6, pie-1 and unc-98. In terms of processing, sumoylated. In terms of tissue distribution, expressed in somatic cells of embryos, the head, hypodermis and tail of larvae and the germline of adults, including oocytes but not mature sperm and spermatocytes.

The protein resides in the nucleus. Has a broad role in development, specifically in the genetic pathway SynMuvB that negatively regulates specification of the vulval cell fate. Required for fem-3 3'-UTR-mediated repression in the regulation of the sperm/oocyte switch. Acts by regulating the translation of fem-3 mRNA, by binding to its 3'-UTR. The chain is MOG interacting and ectopic P-granules protein 1 from Caenorhabditis elegans.